A 440-amino-acid polypeptide reads, in one-letter code: Glucose-1-phosphate adenylyltransferase (440 aa).

Alpha-D-glucose 1-phosphate contacts are provided by residues Tyr-125, Gly-190, 205–206 (EK), and Ser-223.

Belongs to the bacterial/plant glucose-1-phosphate adenylyltransferase family. As to quaternary structure, homotetramer.

It catalyses the reaction alpha-D-glucose 1-phosphate + ATP + H(+) = ADP-alpha-D-glucose + diphosphate. It functions in the pathway glycan biosynthesis; glycogen biosynthesis. Involved in the biosynthesis of ADP-glucose, a building block required for the elongation reactions to produce glycogen. Catalyzes the reaction between ATP and alpha-D-glucose 1-phosphate (G1P) to produce pyrophosphate and ADP-Glc. In Dechloromonas aromatica (strain RCB), this protein is Glucose-1-phosphate adenylyltransferase.